The following is a 415-amino-acid chain: Ornithine cyclodeaminase (415 aa).

The NAD(+) site is built by asparagine 241, alanine 242, aspartate 320, threonine 352, leucine 354, histidine 355, aspartate 373, aspartate 396, and valine 397.

It belongs to the AgrE/ArgZ ornithine cyclodeaminase family. NAD(+) serves as cofactor.

The catalysed reaction is L-ornithine = L-proline + NH4(+). Catalyzes the conversion of ornithine to proline, with the release of ammonia. In Methanococcus maripaludis (strain DSM 14266 / JCM 13030 / NBRC 101832 / S2 / LL), this protein is Ornithine cyclodeaminase.